We begin with the raw amino-acid sequence, 918 residues long: Dual serine/threonine and tyrosine protein kinase (918 aa).

A compositionally biased stretch (basic and acidic residues) spans 1–19; the sequence is MQKDGTRSSRRMEEGDRRN. Residues 1 to 29 are disordered; it reads MQKDGTRSSRRMEEGDRRNGSTGSSGSVS. The Protein kinase domain occupies 643–897; the sequence is PRIGRELGRG…PLMGIVQPML (255 aa). Residues 649-657 and Lys672 each bind ATP; that span reads LGRGQYGVV. The active-site Proton acceptor is the Asp768.

Belongs to the protein kinase superfamily. Ser/Thr protein kinase family.

Its subcellular location is the cytoplasm. It localises to the cell membrane. It is found in the apical cell membrane. The protein localises to the basolateral cell membrane. The protein resides in the cell junction. The catalysed reaction is L-seryl-[protein] + ATP = O-phospho-L-seryl-[protein] + ADP + H(+). It carries out the reaction L-threonyl-[protein] + ATP = O-phospho-L-threonyl-[protein] + ADP + H(+). The enzyme catalyses L-tyrosyl-[protein] + ATP = O-phospho-L-tyrosyl-[protein] + ADP + H(+). Its function is as follows. May act as a positive regulator of ERK phosphorylation downstream of fibroblast growth factor-receptor activation. May induce both caspase-dependent apoptosis and caspase-independent cell death. May play a role in the embryonic development. The protein is Dual serine/threonine and tyrosine protein kinase (dstyk) of Xenopus tropicalis (Western clawed frog).